Here is a 715-residue protein sequence, read N- to C-terminus: Dynein axonemal intermediate chain 7 (715 aa).

The interval 291 to 322 (AVSKDLQEENKQENESNSVHEEETKAEGQGDV) is disordered. Residues 295-318 (DLQEENKQENESNSVHEEETKAEG) are compositionally biased toward basic and acidic residues.

Belongs to the DNAI7 family. Part of the multisubunit axonemal dynein complex formed at least of two heavy chains and a number of intermediate and light chains. Associates with tubulin. Interacts with microtubule. Ubiquitinated. Ubiquitination leads to its degradation through the 26S proteasome. Ubiquitin-proteasome-mediated DNAI7 degradation occurs in mitosis.

Its subcellular location is the cell projection. The protein localises to the cilium. The protein resides in the cytoplasm. Its function is as follows. Via its association with the multisubunit axonemal dynein complex, is potentially involved in the regulation of cilia function. May act as a cell cycle regulator. The chain is Dynein axonemal intermediate chain 7 from Bos taurus (Bovine).